The following is a 125-amino-acid chain: Protein ApaG (125 aa).

The 125-residue stretch at 1 to 125 folds into the ApaG domain; the sequence is MINAPRVCVQ…FRLAIPSLIH (125 aa).

This Pectobacterium carotovorum subsp. carotovorum (strain PC1) protein is Protein ApaG.